The sequence spans 348 residues: Dihydroorotase (348 aa).

2 residues coordinate Zn(2+): His17 and His19. Substrate is bound by residues 19–21 and Asn45; that span reads HLR. Positions 103, 140, and 178 each coordinate Zn(2+). N6-carboxylysine is present on Lys103. His140 is a substrate binding site. Substrate is bound at residue Leu223. Asp251 serves as a coordination point for Zn(2+). Residue Asp251 is part of the active site. Substrate contacts are provided by His255 and Ala267.

This sequence belongs to the metallo-dependent hydrolases superfamily. DHOase family. Class II DHOase subfamily. As to quaternary structure, homodimer. The cofactor is Zn(2+).

The catalysed reaction is (S)-dihydroorotate + H2O = N-carbamoyl-L-aspartate + H(+). It participates in pyrimidine metabolism; UMP biosynthesis via de novo pathway; (S)-dihydroorotate from bicarbonate: step 3/3. Catalyzes the reversible cyclization of carbamoyl aspartate to dihydroorotate. The polypeptide is Dihydroorotase (Escherichia coli O139:H28 (strain E24377A / ETEC)).